A 345-amino-acid chain; its full sequence is Anthranilate phosphoribosyltransferase (345 aa).

5-phospho-alpha-D-ribose 1-diphosphate-binding positions include G81, 84 to 85 (GD), S89, 91 to 94 (NVST), 109 to 117 (KHGNRAATS), and A121. Anthranilate is bound at residue G81. Residue S93 coordinates Mg(2+). An anthranilate-binding site is contributed by N112. Residue R167 coordinates anthranilate. The Mg(2+) site is built by D226 and E227.

Belongs to the anthranilate phosphoribosyltransferase family. Homodimer. It depends on Mg(2+) as a cofactor.

It catalyses the reaction N-(5-phospho-beta-D-ribosyl)anthranilate + diphosphate = 5-phospho-alpha-D-ribose 1-diphosphate + anthranilate. Its pathway is amino-acid biosynthesis; L-tryptophan biosynthesis; L-tryptophan from chorismate: step 2/5. In terms of biological role, catalyzes the transfer of the phosphoribosyl group of 5-phosphorylribose-1-pyrophosphate (PRPP) to anthranilate to yield N-(5'-phosphoribosyl)-anthranilate (PRA). The sequence is that of Anthranilate phosphoribosyltransferase from Methylobacterium radiotolerans (strain ATCC 27329 / DSM 1819 / JCM 2831 / NBRC 15690 / NCIMB 10815 / 0-1).